Consider the following 322-residue polypeptide: Tetraacyldisaccharide 4'-kinase (322 aa).

Residue 54–61 participates in ATP binding; sequence SVGGTGKT.

This sequence belongs to the LpxK family.

It carries out the reaction a lipid A disaccharide + ATP = a lipid IVA + ADP + H(+). Its pathway is glycolipid biosynthesis; lipid IV(A) biosynthesis; lipid IV(A) from (3R)-3-hydroxytetradecanoyl-[acyl-carrier-protein] and UDP-N-acetyl-alpha-D-glucosamine: step 6/6. Transfers the gamma-phosphate of ATP to the 4'-position of a tetraacyldisaccharide 1-phosphate intermediate (termed DS-1-P) to form tetraacyldisaccharide 1,4'-bis-phosphate (lipid IVA). This is Tetraacyldisaccharide 4'-kinase from Francisella philomiragia subsp. philomiragia (strain ATCC 25017 / CCUG 19701 / FSC 153 / O#319-036).